Consider the following 216-residue polypeptide: MGKIGIFGGTFDPPHYGHLIMANEVLDALQLSQIWFLPNRIPPHKQNEQVTRSEDRLRMLELAVAGHPRFHIETIELEREGPSYTYDTIRQLTAMHPDDEFYFIIGADMVEYLPNWHRIDELIELVTFVGVKRPGFSMETPYPVIEVEVPQFAISSSLIRERVQNGQTIRYLVPEGVRLYIEEKGLYGARTSVADCERAADGTSLRAYAWRCRDGC.

Belongs to the NadD family.

The enzyme catalyses nicotinate beta-D-ribonucleotide + ATP + H(+) = deamido-NAD(+) + diphosphate. Its pathway is cofactor biosynthesis; NAD(+) biosynthesis; deamido-NAD(+) from nicotinate D-ribonucleotide: step 1/1. Catalyzes the reversible adenylation of nicotinate mononucleotide (NaMN) to nicotinic acid adenine dinucleotide (NaAD). This chain is Probable nicotinate-nucleotide adenylyltransferase, found in Geobacillus thermodenitrificans (strain NG80-2).